Here is a 306-residue protein sequence, read N- to C-terminus: Metal ABC transporter substrate-binding lipoprotein SloC (306 aa).

Residues 1-19 form the signal peptide; sequence MKKLSLLLLVCLSLLGLFA. Cysteine 20 is lipidated: N-palmitoyl cysteine. Cysteine 20 carries S-diacylglycerol cysteine lipidation. A divalent metal cation-binding residues include histidine 64, histidine 136, glutamate 202, and aspartate 277.

Belongs to the bacterial solute-binding protein 9 family. Lipoprotein receptor antigen (Lrai) subfamily.

It is found in the cell membrane. Functionally, part of the ATP-binding cassette (ABC) transport system SloABC involved in metal import. Binds a metal with high affinity and specificity and delivers it to the membrane permease for translocation into the cytoplasm. May act as an adhesin which is involved on adherence to extracellular matrix. It is an important factor in pathogenesis and infection. May contribute to the formation and accumulation of dental plaque. The polypeptide is Metal ABC transporter substrate-binding lipoprotein SloC (sloC) (Streptococcus mutans serotype c (strain ATCC 700610 / UA159)).